The sequence spans 506 residues: NAD(P)H-quinone oxidoreductase subunit 2 (506 aa).

13 consecutive transmembrane segments (helical) span residues 14–34 (AIIP…VDLA), 42–62 (WAPS…TLQW), 79–99 (LAIA…LISW), 108–128 (PIGE…LLCG), 132–152 (LISV…LSGY), 167–187 (LLVG…LYGL), 206–226 (FITS…IAAV), 240–260 (PTPV…AFAI), 276–296 (LLFT…ALAQ), 302–322 (MLAY…VSGT), 330–350 (VLYL…VILF), 374–394 (LGLS…GFFG), and 409–429 (LLVI…ISVI).

Belongs to the complex I subunit 2 family. In terms of assembly, NDH-1 can be composed of about 15 different subunits; different subcomplexes with different compositions have been identified which probably have different functions.

It is found in the cellular thylakoid membrane. It carries out the reaction a plastoquinone + NADH + (n+1) H(+)(in) = a plastoquinol + NAD(+) + n H(+)(out). It catalyses the reaction a plastoquinone + NADPH + (n+1) H(+)(in) = a plastoquinol + NADP(+) + n H(+)(out). Its function is as follows. NDH-1 shuttles electrons from an unknown electron donor, via FMN and iron-sulfur (Fe-S) centers, to quinones in the respiratory and/or the photosynthetic chain. The immediate electron acceptor for the enzyme in this species is believed to be plastoquinone. Couples the redox reaction to proton translocation, and thus conserves the redox energy in a proton gradient. Cyanobacterial NDH-1 also plays a role in inorganic carbon-concentration. The protein is NAD(P)H-quinone oxidoreductase subunit 2 of Prochlorococcus marinus (strain MIT 9301).